A 327-amino-acid polypeptide reads, in one-letter code: Phenylalanine--tRNA ligase alpha subunit (327 aa).

Glutamate 252 contacts Mg(2+).

It belongs to the class-II aminoacyl-tRNA synthetase family. Phe-tRNA synthetase alpha subunit type 1 subfamily. In terms of assembly, tetramer of two alpha and two beta subunits. Mg(2+) serves as cofactor.

The protein localises to the cytoplasm. The enzyme catalyses tRNA(Phe) + L-phenylalanine + ATP = L-phenylalanyl-tRNA(Phe) + AMP + diphosphate + H(+). The chain is Phenylalanine--tRNA ligase alpha subunit from Vibrio parahaemolyticus serotype O3:K6 (strain RIMD 2210633).